The primary structure comprises 98 residues: Feather keratin 1 (98 aa).

The protein belongs to the avian keratin family. In terms of assembly, the avian keratins (F-ker, S-ker, C-ker and B-ker) are a complex mixture of very similar polypeptides.

This Gallus gallus (Chicken) protein is Feather keratin 1.